We begin with the raw amino-acid sequence, 522 residues long: Tyrosine-protein phosphatase 1 (522 aa).

A disordered region spans residues Arg-32 to Ser-63. The segment covering Ser-33 to Ser-63 has biased composition (low complexity). In terms of domain architecture, Tyrosine-protein phosphatase spans Ile-97–Glu-471. The active-site Phosphocysteine intermediate is the Cys-310. A PTPase insert (Asn-rich) region spans residues Met-327–Tyr-426. Positions Asn-382–Pro-410 are enriched in low complexity. Residues Asn-382–Ala-420 are disordered. Acidic residues predominate over residues Asn-411–Ala-420.

Belongs to the protein-tyrosine phosphatase family. Non-receptor class subfamily. In terms of tissue distribution, expressed predominantly in anterior-like cells and to a lesser degree in prestalk cells.

The protein localises to the cytoplasm. It is found in the cell membrane. The catalysed reaction is O-phospho-L-tyrosyl-[protein] + H2O = L-tyrosyl-[protein] + phosphate. Functionally, may have a role in growth and in the early stages of development. Affects the timing of development. In Dictyostelium discoideum (Social amoeba), this protein is Tyrosine-protein phosphatase 1 (ptpA1-1).